Reading from the N-terminus, the 538-residue chain is Putative cysteine ligase BshC (538 aa).

Residues 460–485 (KINEQIELLERMLKRNIEKKHEVELN) are a coiled coil.

This sequence belongs to the BshC family.

Its function is as follows. Involved in bacillithiol (BSH) biosynthesis. May catalyze the last step of the pathway, the addition of cysteine to glucosamine malate (GlcN-Mal) to generate BSH. The chain is Putative cysteine ligase BshC from Bacillus cereus (strain Q1).